Reading from the N-terminus, the 336-residue chain is WAT1-related protein At2g37450 (336 aa).

9 consecutive transmembrane segments (helical) span residues 7–27 (ALPFILMVLLQIGYAGMDILT), 45–65 (HGVATVVMAPFAFYFDNPVIA), 79–99 (TFAIALYNTLPAVTFILALIF), 115–135 (VVGTVTTVGGIMVMTLVKGPA), 160–180 (GAVLVTIGCFSYACFMILQAI), 189–209 (LSLATWICLIGTIEGVVVALV), 227–247 (LTITYSGIVCSALGYYIGGVV), 255–275 (FVTAFKPLCMIVVAIMSSIIF), and 279–299 (MYLGRALGATVICVGLYLVIW). EamA domains follow at residues 63-126 (VIAQ…GGIM) and 169-298 (FSYA…YLVI).

The protein belongs to the drug/metabolite transporter (DMT) superfamily. Plant drug/metabolite exporter (P-DME) (TC 2.A.7.4) family.

The protein resides in the membrane. This is WAT1-related protein At2g37450 from Arabidopsis thaliana (Mouse-ear cress).